The sequence spans 1593 residues: DNA-directed RNA polymerase subunit beta' (1593 aa).

The Zn(2+) site is built by Cys74, Cys76, Cys89, and Cys92. Mg(2+) is bound by residues Asp648, Asp650, and Asp652. Zn(2+) is bound by residues Cys1026, Cys1100, Cys1107, and Cys1110.

Belongs to the RNA polymerase beta' chain family. The RNAP catalytic core consists of 2 alpha, 1 beta, 1 beta' and 1 omega subunit. When a sigma factor is associated with the core the holoenzyme is formed, which can initiate transcription. The cofactor is Mg(2+). Requires Zn(2+) as cofactor.

The catalysed reaction is RNA(n) + a ribonucleoside 5'-triphosphate = RNA(n+1) + diphosphate. In terms of biological role, DNA-dependent RNA polymerase catalyzes the transcription of DNA into RNA using the four ribonucleoside triphosphates as substrates. This Endomicrobium trichonymphae protein is DNA-directed RNA polymerase subunit beta'.